We begin with the raw amino-acid sequence, 376 residues long: Small ribosomal subunit protein uS11m (376 aa).

It belongs to the universal ribosomal protein uS11 family. In terms of assembly, component of the mitochondrial small ribosomal subunit (mt-SSU). Mature N.crassa 74S mitochondrial ribosomes consist of a small (37S) and a large (54S) subunit. The 37S small subunit contains a 16S ribosomal RNA (16S mt-rRNA) and 32 different proteins. The 54S large subunit contains a 23S rRNA (23S mt-rRNA) and 42 different proteins.

It localises to the mitochondrion. Its function is as follows. Component of the mitochondrial ribosome (mitoribosome), a dedicated translation machinery responsible for the synthesis of mitochondrial genome-encoded proteins, including at least some of the essential transmembrane subunits of the mitochondrial respiratory chain. The mitoribosomes are attached to the mitochondrial inner membrane and translation products are cotranslationally integrated into the membrane. The sequence is that of Small ribosomal subunit protein uS11m (mrps18) from Neurospora crassa (strain ATCC 24698 / 74-OR23-1A / CBS 708.71 / DSM 1257 / FGSC 987).